The chain runs to 216 residues: MTQDSRFPNLFILDHPLIQHKLSHMRDRDTSTRTFRELLREITLLMGYEITRNLPMTTRRLTTPLVEIDAPVIAGKKLAIVPVLRAGIGMSDGLLELVPSARVGHIGVYRAEDHRPVEYLVRLPDLEDRVFILCDPMVATGYSAVHAVDVLKRRNVAGENIMFLALVAAPEGVQVFQDAHPDVKLYVASLDSHLNEHAYIVPGLGDAGDRLFGTKN.

5-phospho-alpha-D-ribose 1-diphosphate contacts are provided by residues Arg-85, Arg-110, and 135-143; that span reads DPMVATGYS. Residues Ile-200 and 205–207 contribute to the uracil site; that span reads GDA. Asp-206 contributes to the 5-phospho-alpha-D-ribose 1-diphosphate binding site.

This sequence belongs to the UPRTase family. Mg(2+) serves as cofactor.

It carries out the reaction UMP + diphosphate = 5-phospho-alpha-D-ribose 1-diphosphate + uracil. It functions in the pathway pyrimidine metabolism; UMP biosynthesis via salvage pathway; UMP from uracil: step 1/1. With respect to regulation, allosterically activated by GTP. Catalyzes the conversion of uracil and 5-phospho-alpha-D-ribose 1-diphosphate (PRPP) to UMP and diphosphate. The polypeptide is Uracil phosphoribosyltransferase (Paraburkholderia phytofirmans (strain DSM 17436 / LMG 22146 / PsJN) (Burkholderia phytofirmans)).